The chain runs to 113 residues: uncharacterized protein (113 aa).

Residues methionine 1–serine 22 form the signal peptide. An N-linked (GlcNAc...) asparagine glycan is attached at asparagine 47.

The protein localises to the secreted. This is an uncharacterized protein from Caenorhabditis elegans.